Here is a 341-residue protein sequence, read N- to C-terminus: Glycerol-1-phosphate dehydrogenase [NAD(P)+] (341 aa).

NAD(+) contacts are provided by residues 81-85 (GKAID) and 103-106 (TTAS). D108 contributes to the substrate binding site. Residue S112 coordinates NAD(+). A substrate-binding site is contributed by D151. Zn(2+) is bound by residues D151 and H232. Substrate is bound at residue H236. A Zn(2+)-binding site is contributed by H253.

This sequence belongs to the glycerol-1-phosphate dehydrogenase family. Zn(2+) serves as cofactor.

It is found in the cytoplasm. The enzyme catalyses sn-glycerol 1-phosphate + NAD(+) = dihydroxyacetone phosphate + NADH + H(+). It carries out the reaction sn-glycerol 1-phosphate + NADP(+) = dihydroxyacetone phosphate + NADPH + H(+). The protein operates within membrane lipid metabolism; glycerophospholipid metabolism. In terms of biological role, catalyzes the NAD(P)H-dependent reduction of dihydroxyacetonephosphate (DHAP or glycerone phosphate) to glycerol 1-phosphate (G1P). The G1P thus generated is used as the glycerophosphate backbone of phospholipids in the cellular membranes of Archaea. The chain is Glycerol-1-phosphate dehydrogenase [NAD(P)+] from Methanococcus aeolicus (strain ATCC BAA-1280 / DSM 17508 / OCM 812 / Nankai-3).